The sequence spans 429 residues: Threonine synthase (429 aa).

Lys108 is modified (N6-(pyridoxal phosphate)lysine).

This sequence belongs to the threonine synthase family. It depends on pyridoxal 5'-phosphate as a cofactor.

It carries out the reaction O-phospho-L-homoserine + H2O = L-threonine + phosphate. The protein operates within amino-acid biosynthesis; L-threonine biosynthesis; L-threonine from L-aspartate: step 5/5. Catalyzes the gamma-elimination of phosphate from L-phosphohomoserine and the beta-addition of water to produce L-threonine. This chain is Threonine synthase (thrC), found in Buchnera aphidicola subsp. Acyrthosiphon pisum (strain APS) (Acyrthosiphon pisum symbiotic bacterium).